A 343-amino-acid polypeptide reads, in one-letter code: Protein-glutamate methylesterase/protein-glutamine glutaminase 2 (343 aa).

In terms of domain architecture, Response regulatory spans 5–122 (KVLVVDDSAI…SVGDMSGQLV (118 aa)). The residue at position 56 (Asp56) is a 4-aspartylphosphate. The CheB-type methylesterase domain maps to 154 to 343 (AETSNKVIAI…SIADEIVRMV (190 aa)). Active-site residues include Ser166, His192, and Asp288.

This sequence belongs to the CheB family. Phosphorylated by CheA. Phosphorylation of the N-terminal regulatory domain activates the methylesterase activity.

It is found in the cytoplasm. The catalysed reaction is [protein]-L-glutamate 5-O-methyl ester + H2O = L-glutamyl-[protein] + methanol + H(+). It catalyses the reaction L-glutaminyl-[protein] + H2O = L-glutamyl-[protein] + NH4(+). Functionally, involved in chemotaxis. Part of a chemotaxis signal transduction system that modulates chemotaxis in response to various stimuli. Catalyzes the demethylation of specific methylglutamate residues introduced into the chemoreceptors (methyl-accepting chemotaxis proteins or MCP) by CheR. Also mediates the irreversible deamidation of specific glutamine residues to glutamic acid. The chain is Protein-glutamate methylesterase/protein-glutamine glutaminase 2 from Syntrophus aciditrophicus (strain SB).